We begin with the raw amino-acid sequence, 397 residues long: Erythromycin C-12 hydroxylase (397 aa).

Residue 74–75 participates in substrate binding; the sequence is HE. His81 and Arg85 together coordinate heme. Position 278 (Gln278) interacts with substrate. Arg279 serves as a coordination point for heme. Basic and acidic residues predominate over residues 307–322; it reads RDSDAHDDPDRFDPSR. Residues 307 to 326 are disordered; sequence RDSDAHDDPDRFDPSRKSGG. 2 residues coordinate heme: His337 and Cys339.

It belongs to the cytochrome P450 family. As to quaternary structure, monomer. It depends on heme b as a cofactor.

The enzyme catalyses erythromycin D + NADPH + O2 + H(+) = erythromycin C + NADP(+) + H2O. The protein operates within antibiotic biosynthesis; erythromycin biosynthesis. Functionally, responsible for the C-12 hydroxylation of the macrolactone ring of erythromycin. Thus, EryK catalyzes the hydroxylation of erythromycin D (ErD) at the C-12 position to produce erythromycin C (ErC). Erythromycin B (ErB) is not a substrate for this enzyme. The protein is Erythromycin C-12 hydroxylase (eryK) of Saccharopolyspora erythraea (strain ATCC 11635 / DSM 40517 / JCM 4748 / NBRC 13426 / NCIMB 8594 / NRRL 2338).